The following is a 143-amino-acid chain: Small ribosomal subunit protein eS19y (143 aa).

This sequence belongs to the eukaryotic ribosomal protein eS19 family.

The protein is Small ribosomal subunit protein eS19y (RPS19B) of Arabidopsis thaliana (Mouse-ear cress).